Consider the following 590-residue polypeptide: Protein ecdysoneless homolog (590 aa).

The disordered stretch occupies residues 445-464 (EDFYGVKNSDTDTDSDSLAD). Residues 455–464 (TDTDSDSLAD) show a composition bias toward acidic residues.

This sequence belongs to the ECD family.

The protein resides in the cytoplasm. The protein localises to the nucleus. Functionally, involved in the regulation of carbohydrate metabolism. May act as a transcription factor. The polypeptide is Protein ecdysoneless homolog (Schizosaccharomyces pombe (strain 972 / ATCC 24843) (Fission yeast)).